Reading from the N-terminus, the 210-residue chain is 3-phospho-D-glycerate guanylyltransferase (210 aa).

Belongs to the CofC family.

It carries out the reaction (2R)-3-phosphoglycerate + GTP + H(+) = 3-[(R)-glyceryl]-diphospho-5'-guanosine + diphosphate. It participates in cofactor biosynthesis; coenzyme F420 biosynthesis. In terms of biological role, guanylyltransferase that catalyzes the activation of (2R)-3-phosphoglycerate (3PG) as 3-[(R)-glyceryl]-diphospho-5'-guanosine, via the condensation of 3PG with GTP. It is involved in the biosynthesis of a derivative of the hydride carrier cofactor coenzyme F420, 3PG-F420. This chain is 3-phospho-D-glycerate guanylyltransferase, found in Colwellia psychrerythraea (strain 34H / ATCC BAA-681) (Vibrio psychroerythus).